The chain runs to 463 residues: L-seryl-tRNA(Sec) selenium transferase (463 aa).

N6-(pyridoxal phosphate)lysine is present on Lys-295.

Belongs to the SelA family. In terms of assembly, homodecamer; pentamer of dimers. Binds only one seryl-tRNA(Sec) per dimer. It depends on pyridoxal 5'-phosphate as a cofactor.

It localises to the cytoplasm. It catalyses the reaction L-seryl-tRNA(Sec) + selenophosphate + H(+) = L-selenocysteinyl-tRNA(Sec) + phosphate. The protein operates within aminoacyl-tRNA biosynthesis; selenocysteinyl-tRNA(Sec) biosynthesis; selenocysteinyl-tRNA(Sec) from L-seryl-tRNA(Sec) (bacterial route): step 1/1. In terms of biological role, converts seryl-tRNA(Sec) to selenocysteinyl-tRNA(Sec) required for selenoprotein biosynthesis. The sequence is that of L-seryl-tRNA(Sec) selenium transferase from Escherichia coli O45:K1 (strain S88 / ExPEC).